The following is a 118-amino-acid chain: Large ribosomal subunit protein uL22c (118 aa).

Belongs to the universal ribosomal protein uL22 family. As to quaternary structure, part of the 50S ribosomal subunit.

It is found in the plastid. The protein resides in the chloroplast. Functionally, this protein binds specifically to 23S rRNA. The globular domain of the protein is located near the polypeptide exit tunnel on the outside of the subunit, while an extended beta-hairpin is found that lines the wall of the exit tunnel in the center of the 70S ribosome. This is Large ribosomal subunit protein uL22c (rpl22) from Rhodomonas salina (Cryptomonas salina).